Reading from the N-terminus, the 843-residue chain is Tetratricopeptide repeat protein 7B (843 aa).

A TPR 1 repeat occupies 97–131 (QESNLIMAKLNYVEGDYKEALNIYARVGLDDLPLT). A phosphoserine mark is found at S160 and S202. 6 TPR repeats span residues 219-252 (ETGL…VETR), 363-396 (SVVY…AFEE), 397-430 (FHLW…KPDD), 479-514 (TYSL…SPTD), 516-548 (QAAF…QGDD), and 549-582 (ANSL…YPEN). Residues S625, S629, S630, S673, S677, S678, and S681 each carry the phosphoserine modification. TPR repeat units lie at residues 696–729 (AQIW…FPMS), 730–763 (HNVL…SPTH), 765–797 (KSMQ…NSTA), and 798–831 (HEVW…EASS).

In terms of assembly, component of a phosphatidylinositol 4-kinase (PI4K) complex, composed of PI4KA, EFR3 (EFR3A or EFR3B), TTC7 (TTC7A or TTC7B) and HYCC (HYCC1 or HYCC2). Interacts with PI4KA, interaction is direct. Interacts with EFR3 (EFR3A or EFR3B), interaction is direct. Interacts with HYCC (HYCC1 or HYCC2), interaction is direct. Association with the PI4K complex is strongly reduced by TMEM150A.

Its subcellular location is the cytoplasm. The protein localises to the cytosol. The protein resides in the cell membrane. Functionally, component of a complex required to localize phosphatidylinositol 4-kinase (PI4K) to the plasma membrane. The complex acts as a regulator of phosphatidylinositol 4-phosphate (PtdIns(4)P) synthesis. In the complex, plays a central role in bridging PI4KA to EFR3B and HYCC1, via direct interactions. The polypeptide is Tetratricopeptide repeat protein 7B (TTC7B) (Homo sapiens (Human)).